We begin with the raw amino-acid sequence, 341 residues long: HTH-type transcriptional repressor PurR (341 aa).

An HTH lacI-type domain is found at 2–56 (ATIKDVAKRANVSTTTVSHVINKTRFVAEETRNAVWTAIKELHYSPSAVARSLKV). Positions 4 to 23 (IKDVAKRANVSTTTVSHVIN) form a DNA-binding region, H-T-H motif. A DNA-binding region spans residues 48-56 (SAVARSLKV). Tyrosine 73, arginine 190, threonine 192, phenylalanine 221, and aspartate 275 together coordinate hypoxanthine.

In terms of assembly, homodimer.

The protein operates within purine metabolism; purine nucleotide biosynthesis [regulation]. Functionally, is the main repressor of the genes involved in the de novo synthesis of purine nucleotides, regulating purB, purC, purEK, purF, purHD, purL, purMN and guaBA expression. PurR is allosterically activated to bind its cognate DNA by binding the purine corepressors, hypoxanthine or guanine, thereby effecting transcription repression. The chain is HTH-type transcriptional repressor PurR from Salmonella paratyphi A (strain ATCC 9150 / SARB42).